The sequence spans 446 residues: Forkhead box protein F2 (446 aa).

A compositionally biased stretch (pro residues) spans 1-18 (MSTEGGPPPPPPRPPPAP). Residues 1–97 (MSTEGGPPPP…TKKATSGLRR (97 aa)) are disordered. The segment covering 45 to 78 (STSSSSSSSSASCASSSSNSVSASAGACKSAASS) has biased composition (low complexity). The segment at residues 100-194 (KPPYSYIALI…EEGSFRRRPR (95 aa)) is a DNA-binding region (fork-head). Disordered regions lie at residues 257 to 278 (AGAP…HMSP), 304 to 325 (GGGG…SPAM), and 340 to 371 (AHWS…GLHP). A compositionally biased stretch (basic residues) spans 263–274 (AHPHHLHHHHVP). The segment covering 311 to 325 (GPDSSSSPVPSSPAM) has biased composition (low complexity).

In terms of assembly, interacts with the transcription factors TBP and TFIIB. In terms of tissue distribution, uniquely expressed in the bronchiolar epithelium and in type II pneumocytes.

The protein resides in the nucleus. Its function is as follows. Probable transcription activator for a number of lung-specific genes. Mediates up-regulation of the E3 ligase IRF2BPL and drives ubiquitination and degradation of CTNNB1. This chain is Forkhead box protein F2 (Foxf2), found in Mus musculus (Mouse).